A 351-amino-acid chain; its full sequence is Dihydroorotate dehydrogenase (quinone) (351 aa).

FMN contacts are provided by residues 61–65 (AGLDK) and Thr85. Lys65 lines the substrate pocket. A substrate-binding site is contributed by 110-114 (NRMGF). Residues Asn139 and Asn172 each contribute to the FMN site. Position 172 (Asn172) interacts with substrate. Residue Ser175 is the Nucleophile of the active site. A substrate-binding site is contributed by Asn177. Lys217 and Thr245 together coordinate FMN. 246-247 (NT) provides a ligand contact to substrate. FMN contacts are provided by residues Gly268, Gly297, and 318 to 319 (YS).

It belongs to the dihydroorotate dehydrogenase family. Type 2 subfamily. Monomer. The cofactor is FMN.

Its subcellular location is the cell membrane. It carries out the reaction (S)-dihydroorotate + a quinone = orotate + a quinol. The protein operates within pyrimidine metabolism; UMP biosynthesis via de novo pathway; orotate from (S)-dihydroorotate (quinone route): step 1/1. Catalyzes the conversion of dihydroorotate to orotate with quinone as electron acceptor. The sequence is that of Dihydroorotate dehydrogenase (quinone) from Xanthomonas oryzae pv. oryzae (strain MAFF 311018).